An 816-amino-acid polypeptide reads, in one-letter code: Sucrose synthase 2 (816 aa).

Ser15 carries the post-translational modification Phosphoserine. The interval 280–757 is GT-B glycosyltransferase; the sequence is MVFNVVILSP…GLQRIEEKYT (478 aa).

It belongs to the glycosyltransferase 1 family. Plant sucrose synthase subfamily.

It carries out the reaction an NDP-alpha-D-glucose + D-fructose = a ribonucleoside 5'-diphosphate + sucrose + H(+). Sucrose-cleaving enzyme that provides UDP-glucose and fructose for various metabolic pathways. In Zea mays (Maize), this protein is Sucrose synthase 2 (SUS1).